The following is a 122-amino-acid chain: Urease subunit beta (122 aa).

This sequence belongs to the urease beta subunit family. In terms of assembly, heterotrimer of UreA (gamma), UreB (beta) and UreC (alpha) subunits. Three heterotrimers associate to form the active enzyme.

Its subcellular location is the cytoplasm. It catalyses the reaction urea + 2 H2O + H(+) = hydrogencarbonate + 2 NH4(+). It participates in nitrogen metabolism; urea degradation; CO(2) and NH(3) from urea (urease route): step 1/1. The protein is Urease subunit beta of Acetivibrio thermocellus (strain ATCC 27405 / DSM 1237 / JCM 9322 / NBRC 103400 / NCIMB 10682 / NRRL B-4536 / VPI 7372) (Clostridium thermocellum).